A 317-amino-acid chain; its full sequence is Glutathione synthetase (317 aa).

Positions 124–310 (EKLFTAWFPE…ITGKLMDAIE (187 aa)) constitute an ATP-grasp domain. 150–207 (FRQEHGDIILKPLDGMGGASIFRVKENDPNVSVIIETLTNHGQNYAMAQTFVPDISNG) is a binding site for ATP. Mg(2+)-binding residues include E281 and N283.

The protein belongs to the prokaryotic GSH synthase family. It depends on Mg(2+) as a cofactor. The cofactor is Mn(2+).

The catalysed reaction is gamma-L-glutamyl-L-cysteine + glycine + ATP = glutathione + ADP + phosphate + H(+). It participates in sulfur metabolism; glutathione biosynthesis; glutathione from L-cysteine and L-glutamate: step 2/2. The protein is Glutathione synthetase of Vibrio vulnificus (strain CMCP6).